Here is a 49-residue protein sequence, read N- to C-terminus: Large ribosomal subunit protein bL33B (49 aa).

It belongs to the bacterial ribosomal protein bL33 family.

This is Large ribosomal subunit protein bL33B from Staphylococcus saprophyticus subsp. saprophyticus (strain ATCC 15305 / DSM 20229 / NCIMB 8711 / NCTC 7292 / S-41).